The following is a 554-amino-acid chain: Polyamine aminopropyltransferase 2 (554 aa).

Positions 1–13 (MIEPHAPAPPGSP) are enriched in pro residues. The disordered stretch occupies residues 1–20 (MIEPHAPAPPGSPPSWGGPC). The next 6 membrane-spanning stretches (helical) occupy residues 37-57 (FLVL…ELEL), 69-89 (VTQA…GSLA), 106-126 (AALA…FAWT), 139-159 (ILLV…VPLL), 184-204 (VGAL…LGQL), and 206-226 (GALL…LGLF). The spermidine synthase stretch occupies residues 235 to 516 (RWLLLTANAV…RTAPAPRLDP (282 aa)). One can recognise a PABS domain in the interval 247 to 492 (ALLATATVLA…SVPGPRRAAA (246 aa)). Glutamine 281 provides a ligand contact to S-methyl-5'-thioadenosine. Histidine 313 and aspartate 335 together coordinate spermidine. S-methyl-5'-thioadenosine-binding positions include glutamate 355 and 389–390 (DA). The active-site Proton acceptor is the aspartate 408. Residues 476 to 495 (DTGPGPGSVPGPRRAAAGPP) are disordered. Over residues 485–495 (PGPRRAAAGPP) the composition is skewed to low complexity.

It belongs to the spermidine/spermine synthase family. As to quaternary structure, homodimer or homotetramer.

It localises to the cell membrane. The catalysed reaction is S-adenosyl 3-(methylsulfanyl)propylamine + putrescine = S-methyl-5'-thioadenosine + spermidine + H(+). It participates in amine and polyamine biosynthesis; spermidine biosynthesis; spermidine from putrescine: step 1/1. Its function is as follows. Catalyzes the irreversible transfer of a propylamine group from the amino donor S-adenosylmethioninamine (decarboxy-AdoMet) to putrescine (1,4-diaminobutane) to yield spermidine. The protein is Polyamine aminopropyltransferase 2 of Streptomyces coelicolor (strain ATCC BAA-471 / A3(2) / M145).